Here is a 316-residue protein sequence, read N- to C-terminus: Transaldolase (316 aa).

The active-site Schiff-base intermediate with substrate is the lysine 132.

It belongs to the transaldolase family. Type 1 subfamily. Homodimer.

It localises to the cytoplasm. It carries out the reaction D-sedoheptulose 7-phosphate + D-glyceraldehyde 3-phosphate = D-erythrose 4-phosphate + beta-D-fructose 6-phosphate. The protein operates within carbohydrate degradation; pentose phosphate pathway; D-glyceraldehyde 3-phosphate and beta-D-fructose 6-phosphate from D-ribose 5-phosphate and D-xylulose 5-phosphate (non-oxidative stage): step 2/3. Its function is as follows. Transaldolase is important for the balance of metabolites in the pentose-phosphate pathway. This Vibrio vulnificus (strain YJ016) protein is Transaldolase.